The primary structure comprises 159 residues: 2-C-methyl-D-erythritol 2,4-cyclodiphosphate synthase (159 aa).

A divalent metal cation is bound by residues aspartate 10 and histidine 12. 4-CDP-2-C-methyl-D-erythritol 2-phosphate is bound by residues 10 to 12 and 37 to 38; these read DVH and HS. Residue histidine 45 participates in a divalent metal cation binding. 4-CDP-2-C-methyl-D-erythritol 2-phosphate-binding positions include 59-61, 64-68, 103-109, 135-138, phenylalanine 142, and arginine 145; these read DIG, FLDTD, AQAPKML, and TTTE.

Belongs to the IspF family. In terms of assembly, homotrimer. It depends on a divalent metal cation as a cofactor.

The enzyme catalyses 4-CDP-2-C-methyl-D-erythritol 2-phosphate = 2-C-methyl-D-erythritol 2,4-cyclic diphosphate + CMP. It functions in the pathway isoprenoid biosynthesis; isopentenyl diphosphate biosynthesis via DXP pathway; isopentenyl diphosphate from 1-deoxy-D-xylulose 5-phosphate: step 4/6. Functionally, involved in the biosynthesis of isopentenyl diphosphate (IPP) and dimethylallyl diphosphate (DMAPP), two major building blocks of isoprenoid compounds. Catalyzes the conversion of 4-diphosphocytidyl-2-C-methyl-D-erythritol 2-phosphate (CDP-ME2P) to 2-C-methyl-D-erythritol 2,4-cyclodiphosphate (ME-CPP) with a corresponding release of cytidine 5-monophosphate (CMP). The polypeptide is 2-C-methyl-D-erythritol 2,4-cyclodiphosphate synthase (Francisella tularensis subsp. holarctica (strain FTNF002-00 / FTA)).